Here is a 142-residue protein sequence, read N- to C-terminus: Putative pre-16S rRNA nuclease (142 aa).

The protein belongs to the YqgF nuclease family.

The protein localises to the cytoplasm. Could be a nuclease involved in processing of the 5'-end of pre-16S rRNA. In Staphylococcus haemolyticus (strain JCSC1435), this protein is Putative pre-16S rRNA nuclease.